A 561-amino-acid chain; its full sequence is MMIAGAEANVEPLVRQSSKPEFGDYQANGAMAAAKKLAMNPREFAQKILDNLDVSDMVDKLEIAGPGFINIFLKPSWLAKQANFALQAVNFGIKTAQPQTILIDYSSPNVAKEMHVGHLRSTIIGDAVVRTLEFLGNNVIRANHVGDWGTQFGMLIAYLEKMENEQASEMQLSDLEAFYRAAKESYDSDQIFAEKARNYVVKLQSGDEYCRTMWKKLVDITMHHNQENYDRLNVTLTEKDVMGESLYNPMLPEIVADLKAKGLAVEDNGAVVVFLDEFKNKDGDPMGVIIQKSDGGFLYTTTDIAAAKYRYETLKVDRALVFSDSRQAQHMQQAWLITRKAGYVPASFSLEHPFFGMMLGKDGKPFKTRSGGTVKLKDLLDEAVERADKLISARSTNLTVAEKSAVVEAVAIGSVKYSDLSKNRTTDYVFDWDNMLTFEGNTAPYMQYAYTRIRSIFARAEIDPDTLTGEMQLTEEKERTLALKLLQFEEALTAVAKEGMPHILCQYLYELAGIFSSFYEACPMLNADEAIKHSRLRLASLTAKTLKQGLDLLGIKTVEKM.

Residues 108–118 (PNVAKEMHVGH) carry the 'HIGH' region motif.

Belongs to the class-I aminoacyl-tRNA synthetase family. Monomer.

It localises to the cytoplasm. The enzyme catalyses tRNA(Arg) + L-arginine + ATP = L-arginyl-tRNA(Arg) + AMP + diphosphate. The polypeptide is Arginine--tRNA ligase (Haemophilus ducreyi (strain 35000HP / ATCC 700724)).